Reading from the N-terminus, the 731-residue chain is MSRSEKLTGEHLAPEPAEMARLVAGTHHNPHGILGAHEYGDHTVIRAFRPHAVEVVALVGKDRFSLQHLDSGLFAVALPFVDLIDYRLQVTYEGCEPHTVADAYRFLPTLGEVDLHLFAEGRHERLWEVLGAHPRSFTTADGVVSGVSFAVWAPNAKGVSLIGEFNGWNGHEAPMRVLGPSGVWELFWPDFPCDGLYKFRVHGADGVVTDRADPFAFGTEVPPQTASRVTSSDYTWGDDDWMAGRALRNPVNEAMSTYEVHLGSWRPGLSYRQLARELTDYIVDQGFTHVELLPVAEHPFAGSWGYQVTSYYAPTSRFGTPDDFRALVDALHQAGIGVIVDWVPAHFPKDAWALGRFDGTPLYEHSDPKRGEQLDWGTYVFDFGRPEVRNFLVANALYWLQEFHIDGLRVDAVASMLYLDYSRPEGGWTPNVHGGRENLEAVQFLQEMNATAHKVAPGIVTIAEESTSWPGVTRPTNIGGLGFSMKWNMGWMHDTLDYVSRDPVYRSYHHHEMTFSMLYAFSENYVLPLSHDEVVHGKGTLWGRMPGNNHVKAAGLRSLLAYQWAHPGKQLLFMGQEFGQRAEWSEQRGLDWFQLDENGFSNGIQRLVRDINDIYRCHPALWSLDTTPEGYSWIDANDSANNVLSFMRYGSDGSVLACVFNFAGAEHRDYRLGLPRAGRWREVLNTDATIYHGSGIGNLGGVDATDDPWHGRPASAVLVLPPTSALWLTPA.

The active-site Nucleophile is the D411. E464 acts as the Proton donor in catalysis.

Belongs to the glycosyl hydrolase 13 family. GlgB subfamily. As to quaternary structure, monomer.

It carries out the reaction Transfers a segment of a (1-&gt;4)-alpha-D-glucan chain to a primary hydroxy group in a similar glucan chain.. It participates in glycan biosynthesis; glycogen biosynthesis. In terms of biological role, catalyzes the formation of the alpha-1,6-glucosidic linkages in glycogen by scission of a 1,4-alpha-linked oligosaccharide from growing alpha-1,4-glucan chains and the subsequent attachment of the oligosaccharide to the alpha-1,6 position. The protein is 1,4-alpha-glucan branching enzyme GlgB of Mycobacterium bovis (strain ATCC BAA-935 / AF2122/97).